Reading from the N-terminus, the 429-residue chain is Phosphomethylpyrimidine synthase (429 aa).

Substrate is bound by residues asparagine 66, methionine 95, tyrosine 124, histidine 163, 185 to 187, 226 to 229, and glutamate 265; these read SRG and DAMR. Residue histidine 269 participates in Zn(2+) binding. A substrate-binding site is contributed by tyrosine 292. Histidine 333 contributes to the Zn(2+) binding site. Positions 409, 412, and 416 each coordinate [4Fe-4S] cluster.

Belongs to the ThiC family. Requires [4Fe-4S] cluster as cofactor.

It catalyses the reaction 5-amino-1-(5-phospho-beta-D-ribosyl)imidazole + S-adenosyl-L-methionine = 4-amino-2-methyl-5-(phosphooxymethyl)pyrimidine + CO + 5'-deoxyadenosine + formate + L-methionine + 3 H(+). Its pathway is cofactor biosynthesis; thiamine diphosphate biosynthesis. Functionally, catalyzes the synthesis of the hydroxymethylpyrimidine phosphate (HMP-P) moiety of thiamine from aminoimidazole ribotide (AIR) in a radical S-adenosyl-L-methionine (SAM)-dependent reaction. This is Phosphomethylpyrimidine synthase from Methanopyrus kandleri (strain AV19 / DSM 6324 / JCM 9639 / NBRC 100938).